A 357-amino-acid polypeptide reads, in one-letter code: Geranylgeranyl pyrophosphate synthase spyE (357 aa).

The tract at residues 36-60 (EAQSQAVPGTRTETEPTGSSPSDLQ) is disordered. Polar residues predominate over residues 50-59 (EPTGSSPSDL). Positions 84, 87, and 116 each coordinate isopentenyl diphosphate. Positions 123 and 127 each coordinate Mg(2+). Arg132 serves as a coordination point for dimethylallyl diphosphate. Arg133 is a binding site for isopentenyl diphosphate. Positions 210, 211, and 244 each coordinate dimethylallyl diphosphate. A Mg(2+)-binding site is contributed by Asp247. Dimethylallyl diphosphate is bound by residues Asn251, Lys261, and Lys271.

This sequence belongs to the FPP/GGPP synthase family. Mg(2+) serves as cofactor.

The catalysed reaction is isopentenyl diphosphate + dimethylallyl diphosphate = (2E)-geranyl diphosphate + diphosphate. It catalyses the reaction isopentenyl diphosphate + (2E)-geranyl diphosphate = (2E,6E)-farnesyl diphosphate + diphosphate. The enzyme catalyses isopentenyl diphosphate + (2E,6E)-farnesyl diphosphate = (2E,6E,10E)-geranylgeranyl diphosphate + diphosphate. The protein operates within secondary metabolite biosynthesis; terpenoid biosynthesis. Geranylgeranyl pyrophosphate synthase; part of the gene cluster that mediates the biosynthesis of meroterpenoids called sartorypyrones. Within the pathway, spyE provides the spyF cosubstrate geranylgeranyl pyrophosphate (GGPP) for the prenylation of triacetic acid lactone (TAL). The biosynthesis of sartorypyrones begins with the production of triacetic acid lactone (TAL) by the NR-PKS spyA using one molecule of acetyl-CoA and two molecules of malonyl-CoA. The prenyltransferase spyF then conjugates geranylgeranyl pyrophosphate (GGPP) to TAL to form geranylgeranyl-triacetate lactone, for which the pathway-specific geranylgeranyl pyrophosphate synthase (GGPS) spyE is required to provide GGPP. Subsequently, geranylgeranyl-triacetate lactone is epoxidized at the terminal olein by the FAD-dependent monooxygenase spyC, followed by cyclization of the terpenoid component catalyzed by the terpene cyclase spyD to produce both the bicyclic sartorypyrone F and the monocyclic sartorypyrone D. Finally, the last step of the biosynthesis involves the acetylation of the meroterpenoids sartorypyrones D and F by the acetyltransferase SpyB to produce sartorypyrones A and G, respectively. This chain is Geranylgeranyl pyrophosphate synthase spyE, found in Aspergillus fumigatus (strain ATCC MYA-4609 / CBS 101355 / FGSC A1100 / Af293) (Neosartorya fumigata).